Consider the following 969-residue polypeptide: Protein translocase subunit SecA (969 aa).

ATP-binding positions include glutamine 99, 117 to 121 (GEGKT), and aspartate 631.

Belongs to the SecA family. In terms of assembly, monomer and homodimer. Part of the essential Sec protein translocation apparatus which comprises SecA, SecYEG and auxiliary proteins SecDF. Other proteins may also be involved.

It localises to the cell inner membrane. The protein resides in the cytoplasm. The catalysed reaction is ATP + H2O + cellular proteinSide 1 = ADP + phosphate + cellular proteinSide 2.. Its function is as follows. Part of the Sec protein translocase complex. Interacts with the SecYEG preprotein conducting channel. Has a central role in coupling the hydrolysis of ATP to the transfer of proteins into and across the cell membrane, serving as an ATP-driven molecular motor driving the stepwise translocation of polypeptide chains across the membrane. The protein is Protein translocase subunit SecA of Chlamydia abortus (strain DSM 27085 / S26/3) (Chlamydophila abortus).